The primary structure comprises 634 residues: Bacteriophytochrome (634 aa).

Position 13 (C13) interacts with biliverdin IXalpha. Residues 13–118 (CAREPIHIPG…YPQQWLVEME (106 aa)) enclose the PAS 1 domain. The tract at residues 13 to 514 (CAREPIHIPG…ELMERKRFQQ (502 aa)) is photosensory core domain. The GAF domain occupies 151–305 (RVAKGLRSLI…VTDAVARTLA (155 aa)). The tract at residues 325–508 (TVREKLITDF…SLRVLIELME (184 aa)) is phytochrome-specific (PHY). The tract at residues 452-480 (WAGNPQLAKLEDIPNSRLSPRKSFDLWQQ) is tongue domain. A PAS 2 domain is found at 515–590 (DFTLLEASLS…ELLQDALRNG (76 aa)). The tract at residues 515–634 (DFTLLEASLS…HWLLQLRDPE (120 aa)) is PAS9, output module, not required to bind biliverdin IX-alpha, required for dimerization.

The protein in the N-terminal section; belongs to the phytochrome family. Forms head-to-head homodimers. In terms of processing, contains one covalently linked biliverdin IX-alpha chromophore; present in the crystal structure as a mixture of Pr and Meta-R configurations.

Photoreceptor which exists in two forms that are reversibly interconvertible by light: far-red light (733 nm) converts protein to the red-absorbing (Pr) form, while red light (630 nm) partly converts the protein to the far-red-absorbing (Pfr) form. Regulates virulence of X.campestris pv. campestris on its host plants, perhaps by fine-tuning expression to ambient light levels and/or spatial cues. The Pr form may sense light and partially inhibit virulence; in the dark (Pfr form) biofilm and xanathan production rise and bacteria are more virulent. Strains overexpressing this protein have significantly decreased amounts of extracellular beta-1,4-endoglucanase, produce less xanthin and have decreased transcription of genes involved in virulence such as endoglucanases, type 2 secretion systems, xanthan production and flagellar-dependent motility. The protein is Bacteriophytochrome (bphP) of Xanthomonas campestris pv. campestris (strain 8004).